Consider the following 354-residue polypeptide: Tribbles homolog 3 (354 aa).

An interaction with DDIT3/CHOP region spans residues 1-127 (MRATPLAASA…QHVARPTEVL (127 aa)). Residues 36-61 (RDEPEPGPLPSLLPPSPPPASDLSPA) form a disordered region. Residues 41 to 55 (PGPLPSLLPPSPPPA) show a composition bias toward pro residues. One can recognise a Protein kinase domain in the interval 68–315 (LGPYILLERE…ALGILLHPWL (248 aa)). The span at 320–333 (GRVSPPQSDRREMD) shows a compositional bias: basic and acidic residues. The interval 320 to 354 (GRVSPPQSDRREMDQVVPDGPQLEEAEEGEVGLYG) is disordered. Positions 341–354 (QLEEAEEGEVGLYG) are enriched in acidic residues.

It belongs to the protein kinase superfamily. CAMK Ser/Thr protein kinase family. Tribbles subfamily. In terms of assembly, interacts with AKT1, AKT2, MAP2K1 and MAP2K7. Interacts with ATF4. Interacts with DDIT3/CHOP and inhibits its interaction with EP300/P300. Interacts with APOBEC3C. Interacts (via N-terminus) with APOBEC3A. Interacts with RELA. Highly expressed in liver. Not detected in heart, brain, spleen, lung, skeletal muscle, kidney or testis.

It localises to the nucleus. In terms of biological role, inactive protein kinase which acts as a regulator of the integrated stress response (ISR), a process for adaptation to various stress. Inhibits the transcriptional activity of DDIT3/CHOP and is involved in DDIT3/CHOP-dependent cell death during ER stress. May play a role in programmed neuronal cell death but does not appear to affect non-neuronal cells. Acts as a negative feedback regulator of the ATF4-dependent transcription during the ISR: while TRIB3 expression is promoted by ATF4, TRIB3 protein interacts with ATF4 and inhibits ATF4 transcription activity. Disrupts insulin signaling by binding directly to Akt kinases and blocking their activation. May bind directly to and mask the 'Thr-308' phosphorylation site in AKT1. Interacts with the NF-kappa-B transactivator p65 RELA and inhibits its phosphorylation and thus its transcriptional activation activity. Interacts with MAPK kinases and regulates activation of MAP kinases. Can inhibit APOBEC3A editing of nuclear DNA. The sequence is that of Tribbles homolog 3 (Trib3) from Mus musculus (Mouse).